The sequence spans 264 residues: Indole-3-glycerol phosphate synthase (264 aa).

The protein belongs to the TrpC family.

The catalysed reaction is 1-(2-carboxyphenylamino)-1-deoxy-D-ribulose 5-phosphate + H(+) = (1S,2R)-1-C-(indol-3-yl)glycerol 3-phosphate + CO2 + H2O. The protein operates within amino-acid biosynthesis; L-tryptophan biosynthesis; L-tryptophan from chorismate: step 4/5. The sequence is that of Indole-3-glycerol phosphate synthase from Lactococcus lactis subsp. cremoris (strain MG1363).